Reading from the N-terminus, the 124-residue chain is MPEKDWIGEFGPSKFKSPIDKLNQLLPESNDPSILYETSQHLLSEFDKTLNDSLRVLNQQINQVSEVLPRLPTMISALDRESKRLFESCEKMDPEPSALMPLQELEKIRSNIQLTISQIDNLTP.

The protein localises to the cytoplasm. It is found in the nucleus. This is an uncharacterized protein from Schizosaccharomyces pombe (strain 972 / ATCC 24843) (Fission yeast).